Reading from the N-terminus, the 206-residue chain is MRPLTPRQAEILELIKRNIADTGMPPTRAEIAKRLGFKSANAAEEHLKALAKKGCIEIIPGTSRGIRLTQANESEEELGLPLIGQVAAGEPILAQEHVEQHYQIDPAMFRPSADFLLRVRGDSMKNIGILEGDLLAVHKAEQARNGQVVVARVEDDVTVKRFEKKGSIVYLHAENEDYSPIVVDLTSESLSIEGLAVGVIRNGDWQ.

Positions 28–48 form a DNA-binding region, H-T-H motif; that stretch reads RAEIAKRLGFKSANAAEEHLK. Active-site for autocatalytic cleavage activity residues include Ser123 and Lys160.

This sequence belongs to the peptidase S24 family. As to quaternary structure, homodimer.

It carries out the reaction Hydrolysis of Ala-|-Gly bond in repressor LexA.. Functionally, represses a number of genes involved in the response to DNA damage (SOS response), including recA and lexA. In the presence of single-stranded DNA, RecA interacts with LexA causing an autocatalytic cleavage which disrupts the DNA-binding part of LexA, leading to derepression of the SOS regulon and eventually DNA repair. This chain is LexA repressor, found in Shewanella sediminis (strain HAW-EB3).